We begin with the raw amino-acid sequence, 416 residues long: Queuine tRNA-ribosyltransferase accessory subunit 2 (416 aa).

Residues Cys-350, Cys-352, Cys-355, and His-381 each coordinate Zn(2+).

Belongs to the queuine tRNA-ribosyltransferase family. QTRT2 subfamily. As to quaternary structure, heterodimer of a catalytic subunit qtrt1 and an accessory subunit qtrt2. Zn(2+) serves as cofactor.

The protein resides in the cytoplasm. It localises to the mitochondrion outer membrane. Its function is as follows. Non-catalytic subunit of the queuine tRNA-ribosyltransferase (TGT) that catalyzes the base-exchange of a guanine (G) residue with queuine (Q) at position 34 (anticodon wobble position) in tRNAs with GU(N) anticodons (tRNA-Asp, -Asn, -His and -Tyr), resulting in the hypermodified nucleoside queuosine (7-(((4,5-cis-dihydroxy-2-cyclopenten-1-yl)amino)methyl)-7-deazaguanosine). This Danio rerio (Zebrafish) protein is Queuine tRNA-ribosyltransferase accessory subunit 2.